The following is an 89-amino-acid chain: Small ribosomal subunit protein uS15 (89 aa).

This sequence belongs to the universal ribosomal protein uS15 family. Part of the 30S ribosomal subunit. Forms a bridge to the 50S subunit in the 70S ribosome, contacting the 23S rRNA.

Functionally, one of the primary rRNA binding proteins, it binds directly to 16S rRNA where it helps nucleate assembly of the platform of the 30S subunit by binding and bridging several RNA helices of the 16S rRNA. Its function is as follows. Forms an intersubunit bridge (bridge B4) with the 23S rRNA of the 50S subunit in the ribosome. This is Small ribosomal subunit protein uS15 from Chromobacterium violaceum (strain ATCC 12472 / DSM 30191 / JCM 1249 / CCUG 213 / NBRC 12614 / NCIMB 9131 / NCTC 9757 / MK).